The chain runs to 144 residues: Arsenate reductase ArsI1 (144 aa).

Cys-14 (nucleophile; cysteine thioarsenate intermediate) is an active-site residue.

It belongs to the ArsC family.

The catalysed reaction is [glutaredoxin]-dithiol + arsenate + glutathione + H(+) = glutathionyl-S-S-[glutaredoxin] + arsenite + H2O. Catalyzes the reduction of arsenate [As(V)] to arsenite [As(III)]. Does not constitute the major arsenate reductase in cells: essential only in the absence of ArsC (AC P74313). The chain is Arsenate reductase ArsI1 from Synechocystis sp. (strain ATCC 27184 / PCC 6803 / Kazusa).